A 380-amino-acid chain; its full sequence is Ribosomal RNA large subunit methyltransferase G (380 aa).

This sequence belongs to the methyltransferase superfamily. RlmG family.

Its subcellular location is the cytoplasm. It catalyses the reaction guanosine(1835) in 23S rRNA + S-adenosyl-L-methionine = N(2)-methylguanosine(1835) in 23S rRNA + S-adenosyl-L-homocysteine + H(+). In terms of biological role, specifically methylates the guanine in position 1835 (m2G1835) of 23S rRNA. In Streptomyces avermitilis (strain ATCC 31267 / DSM 46492 / JCM 5070 / NBRC 14893 / NCIMB 12804 / NRRL 8165 / MA-4680), this protein is Ribosomal RNA large subunit methyltransferase G.